The primary structure comprises 247 residues: UPF0309 protein LMOf2365_2617 (247 aa).

The SIS domain maps to Val-31–Pro-214.

The protein belongs to the UPF0309 family.

The polypeptide is UPF0309 protein LMOf2365_2617 (Listeria monocytogenes serotype 4b (strain F2365)).